Here is a 257-residue protein sequence, read N- to C-terminus: Aspartate/glutamate leucyltransferase (257 aa).

It belongs to the R-transferase family. Bpt subfamily.

Its subcellular location is the cytoplasm. The enzyme catalyses N-terminal L-glutamyl-[protein] + L-leucyl-tRNA(Leu) = N-terminal L-leucyl-L-glutamyl-[protein] + tRNA(Leu) + H(+). The catalysed reaction is N-terminal L-aspartyl-[protein] + L-leucyl-tRNA(Leu) = N-terminal L-leucyl-L-aspartyl-[protein] + tRNA(Leu) + H(+). In terms of biological role, functions in the N-end rule pathway of protein degradation where it conjugates Leu from its aminoacyl-tRNA to the N-termini of proteins containing an N-terminal aspartate or glutamate. This Phenylobacterium zucineum (strain HLK1) protein is Aspartate/glutamate leucyltransferase.